The chain runs to 149 residues: Transcriptional regulator MraZ (149 aa).

SpoVT-AbrB domains are found at residues 7–54 and 83–126; these read KYVN…GISH and ALQL…QPQN.

It belongs to the MraZ family. In terms of assembly, forms oligomers.

The protein localises to the cytoplasm. Its subcellular location is the nucleoid. The sequence is that of Transcriptional regulator MraZ from Rickettsia canadensis (strain McKiel).